The following is a 190-amino-acid chain: Shikimate kinase (190 aa).

19 to 24 (GSGKTT) provides a ligand contact to ATP. T23 contributes to the Mg(2+) binding site. D41, R65, and G87 together coordinate substrate. R124 serves as a coordination point for ATP. R143 is a substrate binding site.

The protein belongs to the shikimate kinase family. Monomer. It depends on Mg(2+) as a cofactor.

It is found in the cytoplasm. It catalyses the reaction shikimate + ATP = 3-phosphoshikimate + ADP + H(+). It participates in metabolic intermediate biosynthesis; chorismate biosynthesis; chorismate from D-erythrose 4-phosphate and phosphoenolpyruvate: step 5/7. Its function is as follows. Catalyzes the specific phosphorylation of the 3-hydroxyl group of shikimic acid using ATP as a cosubstrate. The polypeptide is Shikimate kinase (Synechococcus sp. (strain ATCC 27144 / PCC 6301 / SAUG 1402/1) (Anacystis nidulans)).